A 178-amino-acid polypeptide reads, in one-letter code: ATP synthase subunit delta (178 aa).

This sequence belongs to the ATPase delta chain family. In terms of assembly, F-type ATPases have 2 components, F(1) - the catalytic core - and F(0) - the membrane proton channel. F(1) has five subunits: alpha(3), beta(3), gamma(1), delta(1), epsilon(1). F(0) has three main subunits: a(1), b(2) and c(10-14). The alpha and beta chains form an alternating ring which encloses part of the gamma chain. F(1) is attached to F(0) by a central stalk formed by the gamma and epsilon chains, while a peripheral stalk is formed by the delta and b chains.

The protein localises to the cell inner membrane. Functionally, f(1)F(0) ATP synthase produces ATP from ADP in the presence of a proton or sodium gradient. F-type ATPases consist of two structural domains, F(1) containing the extramembraneous catalytic core and F(0) containing the membrane proton channel, linked together by a central stalk and a peripheral stalk. During catalysis, ATP synthesis in the catalytic domain of F(1) is coupled via a rotary mechanism of the central stalk subunits to proton translocation. This protein is part of the stalk that links CF(0) to CF(1). It either transmits conformational changes from CF(0) to CF(1) or is implicated in proton conduction. The sequence is that of ATP synthase subunit delta from Teredinibacter turnerae (strain ATCC 39867 / T7901).